The primary structure comprises 232 residues: Esterase YpfH (232 aa).

Residues S111, D159, and H191 each act as charge relay system in the active site.

The protein belongs to the AB hydrolase superfamily. AB hydrolase 2 family.

In terms of biological role, displays esterase activity toward palmitoyl-CoA and pNP-butyrate. This is Esterase YpfH (ypfH) from Escherichia coli (strain K12).